A 287-amino-acid polypeptide reads, in one-letter code: uncharacterized protein (287 aa).

10 consecutive transmembrane segments (helical) span residues 4–24 (TTNG…SLPA), 36–56 (FLTV…LLIF), 66–86 (LISL…LTAL), 93–113 (SAHA…FGVL), 122–142 (VFWI…LIQG), 148–168 (LGDA…AEGA), 179–199 (VISW…FFFT), 208–228 (VPAL…GFVF), 237–259 (GIAA…ASVI), and 264–286 (VGWA…RRFA). EamA domains follow at residues 16-139 (LIFS…GFAL) and 158-284 (VVCG…AARR).

It belongs to the EamA transporter family.

The protein resides in the cell membrane. This is an uncharacterized protein from Bacillus subtilis (strain 168).